A 666-amino-acid chain; its full sequence is Probable potassium transport system protein Kup (666 aa).

The next 12 membrane-spanning stretches (helical) occupy residues 16–36, 58–78, 99–119, 141–161, 167–187, 221–241, 253–273, 292–312, 343–363, 373–393, 402–422, and 424–444; these read GFII…LYTM, ISLI…LVAL, TPWL…DGAL, IFQN…LLFA, TGVI…FLGI, IFIL…YSDL, WPFV…WILA, FTMH…QALI, TYIP…VLLF, YGLA…FFLI, VLLM…ASAV, and FMHG…IMII.

It belongs to the HAK/KUP transporter (TC 2.A.72) family.

It localises to the cell membrane. It carries out the reaction K(+)(in) + H(+)(in) = K(+)(out) + H(+)(out). In terms of biological role, transport of potassium into the cell. Likely operates as a K(+):H(+) symporter. In Streptococcus agalactiae serotype III (strain NEM316), this protein is Probable potassium transport system protein Kup.